We begin with the raw amino-acid sequence, 91 residues long: Small ribosomal subunit protein uS15 (91 aa).

This sequence belongs to the universal ribosomal protein uS15 family. As to quaternary structure, part of the 30S ribosomal subunit. Forms a bridge to the 50S subunit in the 70S ribosome, contacting the 23S rRNA.

Functionally, one of the primary rRNA binding proteins, it binds directly to 16S rRNA where it helps nucleate assembly of the platform of the 30S subunit by binding and bridging several RNA helices of the 16S rRNA. Forms an intersubunit bridge (bridge B4) with the 23S rRNA of the 50S subunit in the ribosome. In Rickettsia bellii (strain OSU 85-389), this protein is Small ribosomal subunit protein uS15.